The following is a 243-amino-acid chain: Small ribosomal subunit protein uS3 (243 aa).

The KH type-2 domain occupies Leu39 to His107. A disordered region spans residues Val212–Ala243.

The protein belongs to the universal ribosomal protein uS3 family. In terms of assembly, part of the 30S ribosomal subunit. Forms a tight complex with proteins S10 and S14.

Binds the lower part of the 30S subunit head. Binds mRNA in the 70S ribosome, positioning it for translation. This chain is Small ribosomal subunit protein uS3, found in Chloroflexus aurantiacus (strain ATCC 29364 / DSM 637 / Y-400-fl).